An 820-amino-acid chain; its full sequence is Phenylalanine--tRNA ligase beta subunit (820 aa).

In terms of domain architecture, tRNA-binding spans 42–154; sequence KGGLEGLVIG…EDAVPGTLAK (113 aa). One can recognise a B5 domain in the interval 413–489; that stretch reads AQDFIVELTY…RIYGYNNVEI (77 aa). Mg(2+) is bound by residues Asp467, Asp473, Glu476, and Asp477. Positions 727-820 constitute an FDX-ACB domain; it reads SKFPAVKRDL…LEDKLGAKLR (94 aa).

Belongs to the phenylalanyl-tRNA synthetase beta subunit family. Type 1 subfamily. As to quaternary structure, tetramer of two alpha and two beta subunits. It depends on Mg(2+) as a cofactor.

It is found in the cytoplasm. The enzyme catalyses tRNA(Phe) + L-phenylalanine + ATP = L-phenylalanyl-tRNA(Phe) + AMP + diphosphate + H(+). The polypeptide is Phenylalanine--tRNA ligase beta subunit (Bacteroides fragilis (strain ATCC 25285 / DSM 2151 / CCUG 4856 / JCM 11019 / LMG 10263 / NCTC 9343 / Onslow / VPI 2553 / EN-2)).